A 205-amino-acid polypeptide reads, in one-letter code: Polyamine-modulated factor 1 (205 aa).

The interval 1 to 28 (MAEASSVNVGSGCAEKGPEELSQEPARP) is disordered. Residues 140–190 (YLLQQRDALQRRVQRQEAENRQLADAVLAGRRQLEELQLQAQARQQAWQAL) are a coiled coil.

In terms of assembly, component of the MIS12 complex composed of MIS12, DSN1, NSL1 and PMF1. Interacts with COPS7A. Interacts via its coiled-coil domain with the leucine-zipper domain of NFE2L2. The interaction with NFE2L2 is required for the transcriptional regulation of SSAT.

The protein localises to the nucleus. The protein resides in the chromosome. It is found in the centromere. It localises to the kinetochore. Functionally, part of the MIS12 complex which is required for normal chromosome alignment and segregation and kinetochore formation during mitosis. May act as a cotranscription partner of NFE2L2 involved in regulation of polyamine-induced transcription of SSAT. The protein is Polyamine-modulated factor 1 (PMF1) of Bos taurus (Bovine).